Here is a 422-residue protein sequence, read N- to C-terminus: Adenylosuccinate synthetase (422 aa).

GTP contacts are provided by residues 11–17 (GDEGKGK) and 39–41 (GHT). Residue Asp-12 is the Proton acceptor of the active site. 2 residues coordinate Mg(2+): Asp-12 and Gly-39. Residues 12–15 (DEGK), 37–40 (NAGH), Thr-129, Arg-143, Asn-219, Thr-234, and Arg-298 each bind IMP. His-40 (proton donor) is an active-site residue. Residue 294–300 (VTTGRKR) coordinates substrate. GTP is bound by residues Arg-300, 326–328 (KLD), and 411–413 (GTG).

It belongs to the adenylosuccinate synthetase family. As to quaternary structure, homodimer. It depends on Mg(2+) as a cofactor.

It is found in the cytoplasm. It carries out the reaction IMP + L-aspartate + GTP = N(6)-(1,2-dicarboxyethyl)-AMP + GDP + phosphate + 2 H(+). It functions in the pathway purine metabolism; AMP biosynthesis via de novo pathway; AMP from IMP: step 1/2. Its function is as follows. Plays an important role in the de novo pathway and in the salvage pathway of purine nucleotide biosynthesis. Catalyzes the first committed step in the biosynthesis of AMP from IMP. The protein is Adenylosuccinate synthetase of Talaromyces stipitatus (strain ATCC 10500 / CBS 375.48 / QM 6759 / NRRL 1006) (Penicillium stipitatum).